A 304-amino-acid polypeptide reads, in one-letter code: Deoxyribonuclease-1-like 1 (304 aa).

Positions 1–24 (MPYMAMHGLTVALLLIFLAGGTEA) are cleaved as a signal peptide. N92 is a glycosylation site (N-linked (GlcNAc...) asparagine). Residue E103 is part of the active site. A glycan (N-linked (GlcNAc...) asparagine) is linked at N123. H154 is a catalytic residue. C193 and C230 are disulfide-bonded. N-linked (GlcNAc...) asparagine glycosylation is present at N229.

This sequence belongs to the DNase I family.

It is found in the endoplasmic reticulum. The polypeptide is Deoxyribonuclease-1-like 1 (DNASE1L1) (Cricetulus griseus (Chinese hamster)).